Consider the following 4730-residue polypeptide: Dynein heavy chain, cytoplasmic (4730 aa).

2 disordered regions span residues 1–23 and 91–120; these read MEDQ…VVTP and TINS…QQQS. Positions 1–1935 are stem; that stretch reads MEDQQINVDS…VIHMANATFY (1935 aa). A compositionally biased stretch (low complexity) spans 10–23; sequence SPTSGTNTPPVVTP. Residues 867–900 adopt a coiled-coil conformation; sequence VRKLSTSINNFRDKVDDLIVKYSEIKKQLDGLKS. A disordered region spans residues 964–1016; sequence EDQKDSQSTSGSSNKGGKLNRMNYSIRNKSDEENSSDLTQPQQSQQQQQTISI. Polar residues predominate over residues 969-978; sequence SQSTSGSSNK. The segment covering 1002–1016 has biased composition (low complexity); the sequence is TQPQQSQQQQQTISI. Coiled coils occupy residues 1204 to 1224, 1343 to 1372, 1425 to 1441, and 1661 to 1689; these read EKMN…EKLS, ALET…QALD, RKVR…LKNL, and AIER…YLER. AAA stretches follow at residues 1936-2158, 2238-2531, 2635-2885, and 2978-3252; these read YGFE…VLVS, KKIQ…FTRL, EVET…WDRA, and VFYE…QGRQ. 1974–1981 is an ATP binding site; the sequence is GPAGTGKT. Positions 2231 to 2253 form a coiled coil; it reads IQMDQLRKKIQEIAKQRHLVTKQ. ATP is bound at residue 2276–2283; it reads GPSGGGKT. The tract at residues 2437-2486 is disordered; sequence EPFDPQEKEQQKRNENAQLQQQQQTTITSPILTSPPTTSSSSRSTTSTTS. Residues 2441–2451 are compositionally biased toward basic and acidic residues; sequence PQEKEQQKRNE. A coiled-coil region spans residues 2442 to 2462; that stretch reads QEKEQQKRNENAQLQQQQQTT. Over residues 2454–2486 the composition is skewed to low complexity; sequence QLQQQQQTTITSPILTSPPTTSSSSRSTTSTTS. Residues 2674–2681 and 3016–3023 each bind ATP; these read GPPGSGKT and GVSGGGKS. Coiled-coil stretches lie at residues 3271 to 3349, 3483 to 3585, and 3854 to 3881; these read INEK…VQLD, AQTY…NTQM, and TLET…EISE. The stalk stretch occupies residues 3271–3585; the sequence is INEKRDQLEE…QQSENFNTQM (315 aa). AAA regions lie at residues 3638 to 3867 and 4098 to 4312; these read LSKP…EIAL and SHSF…SIDY. Positions 4432–4465 are disordered; sequence KMQSSEEDGEDDQVSGSSKKESSSSSSEDKGKAK. Residues 4449-4463 show a composition bias toward basic and acidic residues; it reads SKKESSSSSSEDKGK.

It belongs to the dynein heavy chain family. As to quaternary structure, consists of at least two heavy chains and a number of intermediate and light chains.

It localises to the cytoplasm. Its subcellular location is the cytoskeleton. Functionally, cytoplasmic dynein acts as a motor for the intracellular retrograde motility of vesicles and organelles along microtubules. Dynein has ATPase activity; the force-producing power stroke is thought to occur on release of ADP. This Dictyostelium discoideum (Social amoeba) protein is Dynein heavy chain, cytoplasmic (dhcA).